The sequence spans 442 residues: Glutamyl-tRNA reductase (442 aa).

Residues 49-52 (TCNR), S109, 114-116 (ESQ), and Q120 each bind substrate. C50 serves as the catalytic Nucleophile. 189-194 (GAGAMS) serves as a coordination point for NADP(+).

This sequence belongs to the glutamyl-tRNA reductase family. As to quaternary structure, homodimer.

It catalyses the reaction (S)-4-amino-5-oxopentanoate + tRNA(Glu) + NADP(+) = L-glutamyl-tRNA(Glu) + NADPH + H(+). Its pathway is porphyrin-containing compound metabolism; protoporphyrin-IX biosynthesis; 5-aminolevulinate from L-glutamyl-tRNA(Glu): step 1/2. In terms of biological role, catalyzes the NADPH-dependent reduction of glutamyl-tRNA(Glu) to glutamate 1-semialdehyde (GSA). This Kineococcus radiotolerans (strain ATCC BAA-149 / DSM 14245 / SRS30216) protein is Glutamyl-tRNA reductase.